A 64-amino-acid polypeptide reads, in one-letter code: Translation machinery-associated protein 7 homolog (64 aa).

A disordered region spans residues 1–64; that stretch reads MSGREGGKKK…QGGIKKSGKK (64 aa). Residues 21–50 are a coiled coil; it reads EMDEDTAAFKAKQKEQQKALEAAKQKATKG. The span at 32 to 44 shows a compositional bias: basic and acidic residues; sequence KQKEQQKALEAAK.

The protein belongs to the TMA7 family.

This chain is Translation machinery-associated protein 7 homolog, found in Anopheles gambiae (African malaria mosquito).